The following is a 602-amino-acid chain: Solute carrier organic anion transporter family member 1C1 (602 aa).

Topologically, residues 1-43 (MDTSSKENIQLFCKTSVQPVGRPSFKTEYPSSEEKQPCCGELK) are cytoplasmic. The helical transmembrane segment at 44–63 (VFLGALSFVYFAKALAEGYL) threads the bilayer. At 64 to 82 (KSTITQIERRFDIPSSLVG) the chain is on the extracellular side. The chain crosses the membrane as a helical span at residues 83–103 (VIDGSFEIGNLLVITFVSYFG). At 104 to 109 (AKLHRP) the chain is on the cytoplasmic side. A helical transmembrane segment spans residues 110–134 (KIIGAGCLIMGVGTLLIAMPQFFME). Over 135–139 (QYKYE) the chain is Extracellular. The chain crosses the membrane as a helical span at residues 140–156 (IYSPSSNSTLSISPCLL). Residues 157 to 238 (ESSSQLPVSV…ARDFLPSLKY (82 aa)) lie on the Cytoplasmic side of the membrane. A disordered region spans residues 190 to 216 (PRSQSREDSNSSSEKSKFIRDDHTDYQ). Over residues 193–214 (QSREDSNSSSEKSKFIRDDHTD) the composition is skewed to basic and acidic residues. Residues 239–260 (LFGNPVYFLYLCTSTVQFNSLF) traverse the membrane as a helical segment. Over 261–280 (GMVTYKPKYIEQQYGQSSSR) the chain is Extracellular. The chain crosses the membrane as a helical span at residues 281–304 (ANFVIGLINIPAVALGIFSGGIAM). At 305 to 308 (KKFR) the chain is on the cytoplasmic side. Residues 309 to 332 (ISVCGAAKLYLGSSVFGYLLFLSL) traverse the membrane as a helical segment. The Extracellular segment spans residues 333–444 (FALGCENSDV…NGCPQMFLYF (112 aa)). Residues 360-415 (RALFSDCNPRCKCSETKWEPMCGENGITYVSACPAGCQTSNRSGKNIIFYNCTCVG) form the Kazal-like domain. 3 disulfides stabilise this stretch: Cys-366–Cys-396, Cys-372–Cys-392, and Cys-381–Cys-413. 3 N-linked (GlcNAc...) asparagine glycosylation sites follow: Asn-400, Asn-410, and Asn-423. Residues 445–467 (LVISVITSYTLSLGGIPGYILLL) traverse the membrane as a helical segment. Over 468-476 (RCIKPQLKS) the chain is Cytoplasmic. The helical transmembrane segment at 477–502 (FALGIYTLSIRVLAGIPAPVYFGVLI) threads the bilayer. The Extracellular portion of the chain corresponds to 503-536 (DTSCLKWGFKRCGSRGSCRLYDSNVFRHIYLGLT). Residues 537-554 (VILGTVSIFLSIAVLFIL) form a helical membrane-spanning segment. The Cytoplasmic segment spans residues 555-602 (KKNYVSKHRNFITKRERTMVSTRFQKENCTTSDHLLQPKYWPGKETQL).

It belongs to the organo anion transporter (TC 2.A.60) family.

The protein resides in the cell membrane. It carries out the reaction 3,3',5'-triiodo-L-thyronine(out) = 3,3',5'-triiodo-L-thyronine(in). It catalyses the reaction L-thyroxine(out) = L-thyroxine(in). The enzyme catalyses L-thyroxine sulfate(out) = L-thyroxine sulfate(in). Mediates the Na(+)-independent high affinity transport of organic anions such as the thyroid hormones L-thyroxine (T4), L-thyroxine sulfate (T4S), and 3,3',5'-triiodo-L-thyronine (reverse T3, rT3) at the plasma membrane. Regulates T4 levels in different brain regions by transporting T4, and also by serving as an export pump for T4S, which is a source of T4 after hydrolysis by local sulfatases. Increases the access of these substrates to the intracellular sites where they are metabolized by the deiodinases. Other potential substrates, such as triiodothyronine (T3), 17-beta-glucuronosyl estradiol (17beta-estradiol 17-O-(beta-D-glucuronate)), estrone-3-sulfate (E1S) and sulfobromophthalein (BSP) are transported with much lower efficiency. Transports T4 and E1S in a pH-insensitive manner. Facilitates the transport of thyroid hormones across the blood-brain barrier and into glia and neuronal cells in the brain. The chain is Solute carrier organic anion transporter family member 1C1 (SLCO1C1) from Macaca fascicularis (Crab-eating macaque).